The chain runs to 314 residues: MHPSTSRPSRRTLLTATAGAALAAATLVPGTAHASSGGRGHGSGSVSDAERRLAGLERASGARLGVYAYDTGSGRTVAYRADELFPMCSVFKTLSSAAVLRDLDRNGEFLSRRILYTQDDVEQADGAGPETGKPQNLANAQLTVEELCEVSITASDNCAANLMLRELGGPAAVTRFVRSLGDRVTRLDRWEPELNSAEPGRVTDTTSPRAITRTYGRLVLGDALNPRDRRLLTSWLLANTTSGDRFRAGLPDDWTLGDKTGAGRYGTNNDAGVTWPPGRAPIVLTVLTAKTEQDAARDDGLVADAARVLAETLG.

Residues M1–R39 constitute a signal peptide (tat-type signal). Positions T31–E50 are disordered. S89 (acyl-ester intermediate) is an active-site residue. Residue K259 to G261 participates in substrate binding.

It belongs to the class-A beta-lactamase family. Post-translationally, predicted to be exported by the Tat system. The position of the signal peptide cleavage has been experimentally proven.

The catalysed reaction is a beta-lactam + H2O = a substituted beta-amino acid. In Streptomyces albus G, this protein is Beta-lactamase.